Here is a 242-residue protein sequence, read N- to C-terminus: Type III pantothenate kinase (242 aa).

An ATP-binding site is contributed by 5 to 12 (DLGNTRLK). Residues Tyr-94 and 100 to 103 (GCDR) contribute to the substrate site. Asp-102 (proton acceptor) is an active-site residue. Thr-124 lines the ATP pocket. Thr-175 contributes to the substrate binding site.

Belongs to the type III pantothenate kinase family. Homodimer. NH4(+) is required as a cofactor. It depends on K(+) as a cofactor.

It is found in the cytoplasm. The enzyme catalyses (R)-pantothenate + ATP = (R)-4'-phosphopantothenate + ADP + H(+). It participates in cofactor biosynthesis; coenzyme A biosynthesis; CoA from (R)-pantothenate: step 1/5. In terms of biological role, catalyzes the phosphorylation of pantothenate (Pan), the first step in CoA biosynthesis. This Psychrobacter arcticus (strain DSM 17307 / VKM B-2377 / 273-4) protein is Type III pantothenate kinase.